Consider the following 110-residue polypeptide: Nucleoid-associated protein bbp_426 (110 aa).

This sequence belongs to the YbaB/EbfC family. As to quaternary structure, homodimer.

It localises to the cytoplasm. Its subcellular location is the nucleoid. Its function is as follows. Binds to DNA and alters its conformation. May be involved in regulation of gene expression, nucleoid organization and DNA protection. The polypeptide is Nucleoid-associated protein bbp_426 (Buchnera aphidicola subsp. Baizongia pistaciae (strain Bp)).